We begin with the raw amino-acid sequence, 233 residues long: Enolase-phosphatase E1 (233 aa).

2 residues coordinate Mg(2+): D6 and E8. Substrate contacts are provided by residues 128-129 (SS) and K163. Residue D188 participates in Mg(2+) binding.

Belongs to the HAD-like hydrolase superfamily. MasA/MtnC family. As to quaternary structure, monomer. Mg(2+) is required as a cofactor.

It is found in the cytoplasm. The protein localises to the nucleus. The catalysed reaction is 5-methylsulfanyl-2,3-dioxopentyl phosphate + H2O = 1,2-dihydroxy-5-(methylsulfanyl)pent-1-en-3-one + phosphate. Its pathway is amino-acid biosynthesis; L-methionine biosynthesis via salvage pathway; L-methionine from S-methyl-5-thio-alpha-D-ribose 1-phosphate: step 3/6. It functions in the pathway amino-acid biosynthesis; L-methionine biosynthesis via salvage pathway; L-methionine from S-methyl-5-thio-alpha-D-ribose 1-phosphate: step 4/6. In terms of biological role, bifunctional enzyme that catalyzes the enolization of 2,3-diketo-5-methylthiopentyl-1-phosphate (DK-MTP-1-P) into the intermediate 2-hydroxy-3-keto-5-methylthiopentenyl-1-phosphate (HK-MTPenyl-1-P), which is then dephosphorylated to form the acireductone 1,2-dihydroxy-3-keto-5-methylthiopentene (DHK-MTPene). This is Enolase-phosphatase E1 from Yarrowia lipolytica (strain CLIB 122 / E 150) (Yeast).